The primary structure comprises 403 residues: MALRSARGDGPTSGRWDGGAEKGDFNAKRKKKVAEIYQALNSEPTDVAALRRMAISEGGLLTDEIRRKVWPKLLNVNTNDPPPISGKNLRQMSKDYQQVLLDVRRSLRRFPPGMPEEQREGLQEELIDIILLILERNPQLHYYQGYHDIVVTFLLVLGERLATSLVEKLSTHHLRDFMDPTMDNTKHILNYLMPIIDQVNPELHDFMQSAEVGTIFALSWLITWFGHVLSDFRHVVRLYDFFLACHPLMPIYFAAVIVLYREQEVLDCDCDMASVHHLLSQIPQDLPYETLISRAGDLFVQFPPSELAREAAAQPQAEKTAASTFKDFELASAQQRPDMVLRQRFRGLLRPDERTKDVLTKPRTNRFVKLAVMGLTVALGAAALAVVKSALEWAPKFQLQLFP.

The tract at residues 1-29 (MALRSARGDGPTSGRWDGGAEKGDFNAKR) is disordered. A compositionally biased stretch (basic and acidic residues) spans 18–27 (GGAEKGDFNA). The Rab-GAP TBC domain occupies 60–246 (LLTDEIRRKV…RLYDFFLACH (187 aa)). 2 consecutive transmembrane segments (helical) span residues 238-258 (LYDF…AVIV) and 367-387 (FVKL…LAVV).

The protein localises to the membrane. In terms of biological role, GTPase-activating protein (GAP) specific for Rab1 and Rab2 small GTPase families for which it can accelerate the intrinsic GTP hydrolysis rate by more than five orders of magnitude. Also shows GAP activity for RAB18 GTPase. Promotes RAB18 dissociation from the endoplasmic reticulum (ER) membrane into the cytosol, probably through stimulating RAB18 GTP-hydrolysis. Involved in maintaining endoplasmic reticulum structure. This is TBC1 domain family member 20 (TBC1D20) from Bos taurus (Bovine).